The sequence spans 367 residues: Ribosomal lysine N-methyltransferase 5 (367 aa).

Positions 55-74 (EGGRKKKRVRRRNKASSVEE) are disordered. The span at 58 to 68 (RKKKRVRRRNK) shows a compositional bias: basic residues. S-adenosyl-L-methionine-binding positions include W110, 170–172 (GAG), D192, W256, and M288.

It belongs to the class I-like SAM-binding methyltransferase superfamily. RKM5 family.

Its function is as follows. S-adenosyl-L-methionine-dependent protein-lysine N-methyltransferase that monomethylates 60S ribosomal protein L1 (RPL1A and RPL1B) at 'Lys-46'. The sequence is that of Ribosomal lysine N-methyltransferase 5 (RKM5) from Saccharomyces cerevisiae (strain Lalvin EC1118 / Prise de mousse) (Baker's yeast).